Reading from the N-terminus, the 491-residue chain is MEQPPAPKSKLKKLSEDSLTKQPEEVFDVLEKLGEGSYGSVFKAIHKESGQVVAIKQVPVESDLQEIIKEISIMQQCDSPYVVKYYGSYFKNTDLWIVMEYCGAGSVSDIIRLRNKTLIEDEIATILKSTLKGLEYLHFMRKIHRDIKAGNILLNTEGHAKLADFGVAGQLTDTMAKRNTVIGTPFWMAPEVIQEIGYNCVADIWSLGITSIEMAEGKPPYADIHPMRAIFMIPTNPPPTFRKPELWSDDFTDFVKKCLVKNPEQRATATQLLQHPFIKNAKPVSILRDLITEAMEIKAKRHEEQQRELEEEEENSDEDELDSHTMVKTSVESVGTMRATSTMSEGAQTMIEHNSTMLESDLGTMVINSEDEEEEDGTMKRNATSPQVQRPSFMDYFDKQDFKNKSHENCNQNMHEPFPMSKNVFPDNWKVPQDGDFDFLKNLSLEELQMRLKALDPMMEREIEELRQRYTAKRQPILDAMDAKKRRQQNF.

Met1 carries the post-translational modification N-acetylmethionine. Position 15 is a phosphoserine; by PLK1 (Ser15). A Protein kinase domain is found at 27-278; the sequence is FDVLEKLGEG…ATQLLQHPFI (252 aa). Residues 33–41 and Lys56 each bind ATP; that span reads LGEGSYGSV. Phosphothreonine; by PKB/AKT1 is present on Thr117. Catalysis depends on Asp146, which acts as the Proton acceptor. Positions 151 and 164 each coordinate Mg(2+). Phosphothreonine; by autocatalysis is present on residues Thr174 and Thr180. Residues 287 to 328 adopt a coiled-coil conformation; it reads LRDLITEAMEIKAKRHEEQQRELEEEEENSDEDELDSHTMVK. The disordered stretch occupies residues 301–327; the sequence is RHEEQQRELEEEEENSDEDELDSHTMV. Acidic residues predominate over residues 309 to 321; it reads LEEEEENSDEDEL. A Phosphoserine modification is found at Ser316. 2 positions are modified to phosphothreonine; by autocatalysis: Thr336 and Thr378. The segment at 370–392 is disordered; sequence EDEEEEDGTMKRNATSPQVQRPS. The segment covering 381–390 has biased composition (polar residues); the sequence is RNATSPQVQR. Thr384 is subject to Phosphothreonine; by PKB/AKT1. A phosphoserine mark is found at Ser385 and Ser444. An SARAH domain is found at 437 to 484; that stretch reads FDFLKNLSLEELQMRLKALDPMMEREIEELRQRYTAKRQPILDAMDAK. Residues 442 to 475 adopt a coiled-coil conformation; the sequence is NLSLEELQMRLKALDPMMEREIEELRQRYTAKRQ.

Belongs to the protein kinase superfamily. STE Ser/Thr protein kinase family. STE20 subfamily. In terms of assembly, homodimer; mediated via the coiled-coil region. Interacts with NORE1, which inhibits autoactivation. Interacts with and stabilizes SAV1. Interacts with RAF1, which prevents dimerization and phosphorylation. Interacts with RASSF1. Interacts (via SARAH domain) with isoform 1 of NEK2. Interacts with ESR1 only in the presence of SAV1. Interacts with PKB/AKT1. Forms a tripartite complex with MOBKL1B and STK38. Interacts with RASSF2 (via SARAH domain). Interacts with DLG5 (via PDZ domain 3). Interacts with LATS1; this interaction is inhibited in the presence of DLG5. Interacts with MARK3 in the presence of DLG5. Interacts with RASSF5; this interaction inhibits STK3 autoactivation through heterodimerization. Interacts (when phosphorylated) with SLMAP (via FHA domain); the interaction associates STK3 with the STRIPAK complex. Mg(2+) serves as cofactor. Post-translationally, autophosphorylated on two residues Thr-174 and Thr-180, leading to activation. Phosphorylation at Thr-117 and Thr-384 by PKB/AKT1, leads to inhibition of its: cleavage, kinase activity, autophosphorylation at Thr-180, binding to RASSF1 and nuclear translocation, and increase in its binding to RAF1. Phosphorylated at Ser-15 by PLK1, leading to activation. When autophosphorylated at Thr-180, recruits STRIPAK complex and promotes PP2A-mediated dephosphorylation and inactivation of STK3. Proteolytically cleaved by caspase-3 during apoptosis. Proteolytic cleavage results in kinase activation and nuclear translocation of the truncated form (MST1/N). In terms of processing, ubiquitinated by TRIM69; leading to its redistribution to the perinuclear cytoskeleton, where it is phosphorylated by PLK1 and subsequently activated. In terms of tissue distribution, expressed at high levels in adult kidney, skeletal and placenta tissues and at very low levels in adult heart, lung and brain tissues.

The protein localises to the cytoplasm. Its subcellular location is the nucleus. It localises to the cytoskeleton. It is found in the microtubule organizing center. The protein resides in the centrosome. The enzyme catalyses L-seryl-[protein] + ATP = O-phospho-L-seryl-[protein] + ADP + H(+). The catalysed reaction is L-threonyl-[protein] + ATP = O-phospho-L-threonyl-[protein] + ADP + H(+). Inhibited by the C-terminal non-catalytic region. Activated by caspase-cleavage. Full activation also requires homodimerization and autophosphorylation of Thr-180, which are inhibited by the proto-oncogene product RAF1. Activated by RASSF1 which acts by preventing its dephosphorylation. When autophosphorylated at Thr-180, recruits STRIPAK complex and promotes PP2A-mediated dephosphorylation and inactivation of STK3. Its function is as follows. Stress-activated, pro-apoptotic kinase which, following caspase-cleavage, enters the nucleus and induces chromatin condensation followed by internucleosomal DNA fragmentation. Key component of the Hippo signaling pathway which plays a pivotal role in organ size control and tumor suppression by restricting proliferation and promoting apoptosis. The core of this pathway is composed of a kinase cascade wherein STK3/MST2 and STK4/MST1, in complex with its regulatory protein SAV1, phosphorylates and activates LATS1/2 in complex with its regulatory protein MOB1, which in turn phosphorylates and inactivates YAP1 oncoprotein and WWTR1/TAZ. Phosphorylation of YAP1 by LATS2 inhibits its translocation into the nucleus to regulate cellular genes important for cell proliferation, cell death, and cell migration. STK3/MST2 and STK4/MST1 are required to repress proliferation of mature hepatocytes, to prevent activation of facultative adult liver stem cells (oval cells), and to inhibit tumor formation. Phosphorylates NKX2-1. Phosphorylates NEK2 and plays a role in centrosome disjunction by regulating the localization of NEK2 to centrosome, and its ability to phosphorylate CROCC and CEP250. In conjunction with SAV1, activates the transcriptional activity of ESR1 through the modulation of its phosphorylation. Positively regulates RAF1 activation via suppression of the inhibitory phosphorylation of RAF1 on 'Ser-259'. Phosphorylates MOBKL1A and RASSF2. Phosphorylates MOBKL1B on 'Thr-74'. Acts cooperatively with MOBKL1B to activate STK38. This chain is Serine/threonine-protein kinase 3, found in Homo sapiens (Human).